The following is a 362-amino-acid chain: MWTLVPVTFALRLLSTFVQPLGSLGSSLGPLFLWLWAAFWRAGGDRSRQQLQGKTEAGEPPRAQEDSHLPTTPTSVNYHFTRQCNYKCGFCFHTAKTSFVLPLEEAKRGLWLLKEAGMEKINFSGGEPFIHDRGEYLGKLVRFCKEELQLPSVSIVSNGSLIWERWFKSYGEYLDILAISCDSFDEQVNVLIGRGQGKKNHVENLQKLRTWCRDYKVAFKINSVINRFNVEEDMTEHIKALNPVRWKVFQCLLIEGENVGEDALREAEQFVISDEEFEEFLDRHKDVSCLVPESNRQMRDSYLILDEYMRFLNCRNGRKDPSKSILDVGVEKAIKFSGFDEKMFLKRGGKYVWSKADLKLDW.

The segment at 49–71 is disordered; the sequence is QQLQGKTEAGEPPRAQEDSHLPT. Residues 56 to 68 show a composition bias toward basic and acidic residues; sequence EAGEPPRAQEDSH. The Radical SAM core domain occupies 70-290; sequence PTTPTSVNYH…LDRHKDVSCL (221 aa). Residues Cys84, Cys88, and Cys91 each coordinate [4Fe-4S] cluster. Lys198 is modified (N6-acetyllysine). Lys207 is covalently cross-linked (Glycyl lysine isopeptide (Lys-Gly) (interchain with G-Cter in ubiquitin)).

This sequence belongs to the radical SAM superfamily. RSAD2 family. In terms of assembly, homodimer. Interacts with IRAK1 and TRAF6. Interacts with FPPS. Interacts with HADHB. Interacts (via C-terminus) with VAPA/VAP33 (via C-terminus). Requires [4Fe-4S] cluster as cofactor. Post-translationally, acetylated by HAT1. HAT1-mediated acetylation of Lys-198 in turn recruits UBE4A that stimulates RSAD2 polyubiquitination leading to proteasomal degradation. In terms of processing, 'Lys-6'-linked polyubiquitination at Lys-207 leads to RSAD2 protein degradation.

It is found in the endoplasmic reticulum membrane. It localises to the golgi apparatus. Its subcellular location is the endoplasmic reticulum. The protein resides in the lipid droplet. The protein localises to the mitochondrion. It is found in the mitochondrion inner membrane. It localises to the mitochondrion outer membrane. It carries out the reaction CTP + AH2 + S-adenosyl-L-methionine = 3'-deoxy-3',4'-didehydro-CTP + 5'-deoxyadenosine + L-methionine + A + H2O + H(+). IRAK1 and TRAF6 synergistically activate RSAD2 increasing its activity with CTP as substrate about 10-fold. Functionally, interferon-inducible antiviral protein which plays a major role in the cell antiviral state induced by type I and type II interferon. Catalyzes the conversion of cytidine triphosphate (CTP) to 3'-deoxy-3',4'-didehydro-CTP (ddhCTP) via a SAM-dependent radical mechanism. In turn, ddhCTP acts as a chain terminator for the RNA-dependent RNA polymerases from multiple viruses and directly inhibits viral replication. Therefore, inhibits a wide range of DNA and RNA viruses. Also promotes TLR7 and TLR9-dependent production of IFN-beta production in plasmacytoid dendritic cells (pDCs) by facilitating 'Lys-63'-linked ubiquitination of IRAK1 by TRAF6. Plays a role in CD4+ T-cells activation and differentiation. Facilitates T-cell receptor (TCR)-mediated GATA3 activation and optimal T-helper 2 (Th2) cytokine production by modulating NFKB1 and JUNB activities. Can inhibit secretion of soluble proteins. This Sus scrofa (Pig) protein is S-adenosylmethionine-dependent nucleotide dehydratase RSAD2.